Here is a 616-residue protein sequence, read N- to C-terminus: Prolactin receptor (616 aa).

An N-terminal signal peptide occupies residues 1-24 (MKENVASMIVFLLLLFLNIRLLKG). The Extracellular segment spans residues 25 to 234 (QSPPGKPFIF…QIPNDFTMKD (210 aa)). Fibronectin type-III domains lie at 27–128 (PPGK…VEPD) and 129–229 (PPVN…IPND). Cysteines 36 and 46 form a disulfide. Residue Asn59 is glycosylated (N-linked (GlcNAc...) asparagine). A disulfide bridge connects residues Cys75 and Cys86. 2 N-linked (GlcNAc...) asparagine glycosylation sites follow: Asn104 and Asn132. Zn(2+)-binding residues include Asp211 and His212. Positions 215 to 219 (WSVWS) match the WSXWS motif motif. The helical transmembrane segment at 235-258 (ITVWIFVAVLSTIICLIMVWAVAL) threads the bilayer. At 259–616 (KGYSMVTCIF…DPACFMHSLH (358 aa)) the chain is on the cytoplasmic side. Positions 267–275 (IFPPVPGPK) match the Box 1 motif motif. 3 disordered regions span residues 326 to 375 (MPAH…STFH), 454 to 492 (QSSK…PKEK), and 568 to 593 (ESTK…STAP). Residues 463–482 (GEEKATKQREVESSHSKAEQ) show a composition bias toward basic and acidic residues.

It belongs to the type I cytokine receptor family. Type 1 subfamily. As to quaternary structure, interacts with SMARCA1. Interacts with NEK3 and VAV2 and this interaction is prolactin-dependent.

The protein localises to the membrane. In terms of biological role, this is a receptor for the anterior pituitary hormone prolactin. The polypeptide is Prolactin receptor (PRLR) (Oryctolagus cuniculus (Rabbit)).